Here is a 257-residue protein sequence, read N- to C-terminus: Anti-Pycsar protein Apyc1 (257 aa).

The beta-lactamase-like stretch occupies residues 21 to 231 (YNNSALVEFS…EDQSRVFLMH (211 aa)). 7 residues coordinate Zn(2+): His-64, His-66, Asp-68, His-69, His-156, Asp-180, and His-231.

The protein belongs to the anti-Pycsar protein Apyc1 family. Homodimer. It depends on Zn(2+) as a cofactor.

It carries out the reaction 3',5'-cyclic CMP + H2O = CMP + H(+). The catalysed reaction is 3',5'-cyclic UMP + H2O = UMP + H(+). Functionally, counteracts the host Pycsar antiviral defense system. Phosphodiesterase that enables metal-dependent hydrolysis of host cyclic nucleotide Pycsar defense signals such as cCMP and cUMP. The chain is Anti-Pycsar protein Apyc1 from Bacillus phage 010DV004.